A 537-amino-acid chain; its full sequence is Carboxypeptidase Y homolog A (537 aa).

The N-terminal stretch at 1-17 is a signal peptide; that stretch reads MRLSTSALVLGAASSAV. The propeptide occupies 18 to 124; sequence AFDQKVLGDL…RLDNYNLRAK (107 aa). 5 disulfide bridges follow: Cys178/Cys418, Cys312/Cys326, Cys336/Cys359, Cys343/Cys352, and Cys381/Cys388. The N-linked (GlcNAc...) asparagine glycan is linked to Asn209. Ser265 is an active-site residue. Asp457 is an active-site residue. N-linked (GlcNAc...) asparagine glycosylation occurs at Asn503. His514 is an active-site residue.

Belongs to the peptidase S10 family.

The protein localises to the vacuole. It catalyses the reaction Release of a C-terminal amino acid with broad specificity.. Its function is as follows. Vacuolar carboxypeptidase involved in degradation of small peptides. Digests preferentially peptides containing an aliphatic or hydrophobic residue in P1' position, as well as methionine, leucine or phenylalanine in P1 position of ester substrate. This is Carboxypeptidase Y homolog A (CPYA) from Fusarium vanettenii (strain ATCC MYA-4622 / CBS 123669 / FGSC 9596 / NRRL 45880 / 77-13-4) (Fusarium solani subsp. pisi).